Consider the following 193-residue polypeptide: Ion-translocating oxidoreductase complex subunit A (193 aa).

Helical transmembrane passes span 5–25 (LLLFVGTILVNNFVLVKFLGL), 39–59 (MGMGLATTFVMTLASICAWLI), 63–83 (ILIPLNLIYLRTLAFILVIAV), 102–122 (LLGIFLPLITTNCAVLGVALL), 134–154 (ALYGFSAAVGFSLVMVLFTAI), and 171–191 (AIALITAGLMSLAFMGFSGLV).

The protein belongs to the NqrDE/RnfAE family. As to quaternary structure, the complex is composed of six subunits: RsxA, RsxB, RsxC, RsxD, RsxE and RsxG.

Its subcellular location is the cell inner membrane. Its function is as follows. Part of a membrane-bound complex that couples electron transfer with translocation of ions across the membrane. Required to maintain the reduced state of SoxR. The protein is Ion-translocating oxidoreductase complex subunit A of Shigella boydii serotype 4 (strain Sb227).